Consider the following 291-residue polypeptide: Elongation factor Ts (291 aa).

The tract at residues 80–83 (TDFV) is involved in Mg(2+) ion dislocation from EF-Tu.

It belongs to the EF-Ts family.

The protein resides in the cytoplasm. Its function is as follows. Associates with the EF-Tu.GDP complex and induces the exchange of GDP to GTP. It remains bound to the aminoacyl-tRNA.EF-Tu.GTP complex up to the GTP hydrolysis stage on the ribosome. The sequence is that of Elongation factor Ts from Acinetobacter baylyi (strain ATCC 33305 / BD413 / ADP1).